The chain runs to 340 residues: Phosphate carrier protein, mitochondrial (340 aa).

A mitochondrion-targeting transit peptide spans 1–27 (MSVFSQLAESSKQNPFSLPVRSGNCAS). 3 Solcar repeats span residues 41–125 (KYYA…FKNV), 138–222 (YRTS…TVEA), and 239–317 (EQLV…VKVA). Transmembrane regions (helical) follow at residues 47–67 (ALGGVLSCGITHTAIVPLDLV), 95–114 (RALVKGWAPTLLGYSAQGLG), 141–161 (SLYLAASASAEFFADILLAPM), 200–220 (PLWMRQIPYTMMKFACFEKTV), 241–261 (LVVTFVAGYIAGVFCAIVSHP), and 297–317 (IIMIGTLTALQWFIYDSVKVA).

This sequence belongs to the mitochondrial carrier (TC 2.A.29) family.

Its subcellular location is the mitochondrion inner membrane. Functionally, transport of phosphate groups from the cytosol to the mitochondrial matrix. In Caenorhabditis elegans, this protein is Phosphate carrier protein, mitochondrial.